The primary structure comprises 113 residues: ATP-dependent Clp protease adapter protein ClpS (113 aa).

The segment at 1–24 (MTAQLHMMSDKHDQDNDASVLLQT) is disordered.

This sequence belongs to the ClpS family. As to quaternary structure, binds to the N-terminal domain of the chaperone ClpA.

Involved in the modulation of the specificity of the ClpAP-mediated ATP-dependent protein degradation. This Ruegeria pomeroyi (strain ATCC 700808 / DSM 15171 / DSS-3) (Silicibacter pomeroyi) protein is ATP-dependent Clp protease adapter protein ClpS.